The primary structure comprises 93 residues: Putative regulatory protein LBL_1834 (93 aa).

The protein belongs to the RemA family.

The sequence is that of Putative regulatory protein LBL_1834 from Leptospira borgpetersenii serovar Hardjo-bovis (strain L550).